A 750-amino-acid polypeptide reads, in one-letter code: Photosystem I P700 chlorophyll a apoprotein A1 (750 aa).

A run of 8 helical transmembrane segments spans residues 70–93, 156–179, 195–219, 291–309, 346–369, 385–411, 433–455, and 531–549; these read VFSA…FHGA, LYST…FHYH, LNHH…HVSL, TVHH…GHMY, WHAQ…HHMY, LSLF…IFMV, AIVS…LYIH, and FLVH…LILL. Residues C573 and C582 each contribute to the [4Fe-4S] cluster site. 2 helical membrane passes run 589 to 610 and 664 to 686; these read HVFL…HFSW and LSAY…MFLF. H675 serves as a coordination point for chlorophyll a'. Residues M683 and Y691 each coordinate chlorophyll a. Phylloquinone is bound at residue W692. The helical transmembrane segment at 724 to 744 threads the bilayer; the sequence is AVGVAHYLLGGIATTWAFFLA.

Belongs to the PsaA/PsaB family. In terms of assembly, the PsaA/B heterodimer binds the P700 chlorophyll special pair and subsequent electron acceptors. PSI consists of a core antenna complex that captures photons, and an electron transfer chain that converts photonic excitation into a charge separation. The eukaryotic PSI reaction center is composed of at least 11 subunits. P700 is a chlorophyll a/chlorophyll a' dimer, A0 is one or more chlorophyll a, A1 is one or both phylloquinones and FX is a shared 4Fe-4S iron-sulfur center. is required as a cofactor.

Its subcellular location is the plastid. The protein resides in the chloroplast thylakoid membrane. It catalyses the reaction reduced [plastocyanin] + hnu + oxidized [2Fe-2S]-[ferredoxin] = oxidized [plastocyanin] + reduced [2Fe-2S]-[ferredoxin]. PsaA and PsaB bind P700, the primary electron donor of photosystem I (PSI), as well as the electron acceptors A0, A1 and FX. PSI is a plastocyanin-ferredoxin oxidoreductase, converting photonic excitation into a charge separation, which transfers an electron from the donor P700 chlorophyll pair to the spectroscopically characterized acceptors A0, A1, FX, FA and FB in turn. Oxidized P700 is reduced on the lumenal side of the thylakoid membrane by plastocyanin. This Huperzia lucidula (Shining clubmoss) protein is Photosystem I P700 chlorophyll a apoprotein A1.